Here is a 127-residue protein sequence, read N- to C-terminus: Aspartate 1-decarboxylase (127 aa).

The active-site Schiff-base intermediate with substrate; via pyruvic acid is the serine 25. The residue at position 25 (serine 25) is a Pyruvic acid (Ser). Position 57 (threonine 57) interacts with substrate. The active-site Proton donor is tyrosine 58. Residue 73–75 (GAA) coordinates substrate.

It belongs to the PanD family. Heterooctamer of four alpha and four beta subunits. Pyruvate is required as a cofactor. In terms of processing, is synthesized initially as an inactive proenzyme, which is activated by self-cleavage at a specific serine bond to produce a beta-subunit with a hydroxyl group at its C-terminus and an alpha-subunit with a pyruvoyl group at its N-terminus.

The protein resides in the cytoplasm. It catalyses the reaction L-aspartate + H(+) = beta-alanine + CO2. It participates in cofactor biosynthesis; (R)-pantothenate biosynthesis; beta-alanine from L-aspartate: step 1/1. Its function is as follows. Catalyzes the pyruvoyl-dependent decarboxylation of aspartate to produce beta-alanine. In Bacillus velezensis (strain DSM 23117 / BGSC 10A6 / LMG 26770 / FZB42) (Bacillus amyloliquefaciens subsp. plantarum), this protein is Aspartate 1-decarboxylase.